The primary structure comprises 468 residues: UDP-N-acetylmuramate--L-alanine ligase (468 aa).

117-123 (GTHGKTT) provides a ligand contact to ATP.

Belongs to the MurCDEF family.

It localises to the cytoplasm. The catalysed reaction is UDP-N-acetyl-alpha-D-muramate + L-alanine + ATP = UDP-N-acetyl-alpha-D-muramoyl-L-alanine + ADP + phosphate + H(+). The protein operates within cell wall biogenesis; peptidoglycan biosynthesis. Functionally, cell wall formation. The protein is UDP-N-acetylmuramate--L-alanine ligase of Maricaulis maris (strain MCS10) (Caulobacter maris).